The chain runs to 86 residues: uncharacterized protein (86 aa).

The next 3 membrane-spanning stretches (helical) occupy residues 4–24 (ILIIAEYTLLASLAVFSIAAV), 34–54 (MGLVGISGLNIAIATILILIN), and 64–84 (DIAYALVLLGPVGTIAFARVL).

To M.jannaschii MJ1223.

It is found in the cell membrane. This is an uncharacterized protein from Methanothermobacter thermautotrophicus (strain ATCC 29096 / DSM 1053 / JCM 10044 / NBRC 100330 / Delta H) (Methanobacterium thermoautotrophicum).